The sequence spans 319 residues: L-lactate dehydrogenase 2 (319 aa).

NAD(+) contacts are provided by residues valine 17, aspartate 38, lysine 43, tyrosine 69, and 83-84; that span reads GA. 2 residues coordinate substrate: glutamine 86 and arginine 92. NAD(+) is bound by residues serine 105, 122–124, and serine 147; that span reads ATN. Residue 124 to 127 coordinates substrate; sequence NPVD. 152-155 provides a ligand contact to substrate; the sequence is DSGR. Positions 157 and 172 each coordinate beta-D-fructose 1,6-bisphosphate. Catalysis depends on histidine 179, which acts as the Proton acceptor. At tyrosine 224 the chain carries Phosphotyrosine. A substrate-binding site is contributed by threonine 233.

Belongs to the LDH/MDH superfamily. LDH family. As to quaternary structure, homotetramer.

Its subcellular location is the cytoplasm. It catalyses the reaction (S)-lactate + NAD(+) = pyruvate + NADH + H(+). It participates in fermentation; pyruvate fermentation to lactate; (S)-lactate from pyruvate: step 1/1. With respect to regulation, allosterically activated by fructose 1,6-bisphosphate (FBP). Catalyzes the conversion of lactate to pyruvate. In Peribacillus psychrosaccharolyticus (Bacillus psychrosaccharolyticus), this protein is L-lactate dehydrogenase 2.